Consider the following 909-residue polypeptide: Phosphoenolpyruvate carboxylase (909 aa).

Active-site residues include H151 and K578.

This sequence belongs to the PEPCase type 1 family. Mg(2+) serves as cofactor.

It catalyses the reaction oxaloacetate + phosphate = phosphoenolpyruvate + hydrogencarbonate. Functionally, forms oxaloacetate, a four-carbon dicarboxylic acid source for the tricarboxylic acid cycle. This is Phosphoenolpyruvate carboxylase from Caulobacter vibrioides (strain ATCC 19089 / CIP 103742 / CB 15) (Caulobacter crescentus).